The chain runs to 388 residues: Salivary protein Tsal2A (388 aa).

The N-terminal stretch at 1–18 (MSLLYGLLILAFTRSCLV) is a signal peptide. Asparagine 260 is a glycosylation site (N-linked (GlcNAc...) asparagine).

Belongs to the DNA/RNA non-specific endonuclease family. It depends on a divalent metal cation as a cofactor. As to expression, saliva (at protein level).

It localises to the secreted. Functionally, binds double-stranded DNA (dsDNA) with high affinity. Binds double-stranded RNA. Binds single-stranded DNA with lower affinity and with a preference for purine-rich sequences. Shows residual nuclease activity for dsDNA. Facilitates blood meal intake by lowering the local viscosity created by the release of host DNA. The polypeptide is Salivary protein Tsal2A (Glossina morsitans morsitans (Savannah tsetse fly)).